Reading from the N-terminus, the 178-residue chain is Putative pre-16S rRNA nuclease (178 aa).

The span at 1–18 (MDHAEQGPDRPGVDDPGR) shows a compositional bias: basic and acidic residues. The interval 1–21 (MDHAEQGPDRPGVDDPGRGRR) is disordered.

This sequence belongs to the YqgF nuclease family.

It localises to the cytoplasm. Its function is as follows. Could be a nuclease involved in processing of the 5'-end of pre-16S rRNA. The sequence is that of Putative pre-16S rRNA nuclease from Rhodococcus jostii (strain RHA1).